The chain runs to 381 residues: Arrestin-C (381 aa).

It belongs to the arrestin family. Homodimer; disulfide-linked in response to retinal illumination. Interacts with CXCR4; the interaction is dependent on the C-terminal phosphorylation of CXCR4 and modulates the calcium ion mobilization activity of CXCR4. Interacts with GPR84. Inner and outer segments, and the inner plexiform regions of the retina.

Its subcellular location is the photoreceptor inner segment. It localises to the cell projection. The protein resides in the cilium. The protein localises to the photoreceptor outer segment. Functionally, may play a role in an as yet undefined retina-specific signal transduction. Could bind to photoactivated-phosphorylated red/green opsins. The protein is Arrestin-C (Arr3) of Mus musculus (Mouse).